Here is a 2161-residue protein sequence, read N- to C-terminus: Voltage-dependent L-type calcium channel subunit alpha-1D (2161 aa).

Disordered stretches follow at residues 1–21 (MMMMMMMKKMQHQRQQQADHA), 30–49 (TRLPLSGEGPTSQPNSSKQT), and 64–100 (KAAQTMSTSAPPPVGSLSQRKRQQYAKSKKQGNSSNS). At 1 to 126 (MMMMMMMKKM…RACISIVEWK (126 aa)) the chain is on the cytoplasmic side. A compositionally biased stretch (polar residues) spans 38–49 (GPTSQPNSSKQT). Over residues 82 to 93 (QRKRQQYAKSKK) the composition is skewed to basic residues. Residues 113–409 (NPIRRACISI…LVLGVLSGEF (297 aa)) form an I repeat. The helical transmembrane segment at 127–145 (PFDIFILLAIFANCVALAI) threads the bilayer. Residues 146 to 163 (YIPFPEDDSNSTNHNLEK) are Extracellular-facing. N-linked (GlcNAc...) asparagine glycosylation is present at asparagine 155. A helical transmembrane segment spans residues 164 to 183 (VEYAFLIIFTVETFLKIIAY). The Cytoplasmic portion of the chain corresponds to 184–195 (GLLLHPNAYVRN). The helical transmembrane segment at 196 to 214 (GWNLLDFVIVIVGLFSVIL) threads the bilayer. The Extracellular segment spans residues 215–235 (EQLTKETEGGNHSSGKSGGFD). A glycan (N-linked (GlcNAc...) asparagine) is linked at asparagine 225. The chain crosses the membrane as a helical span at residues 236-254 (VKALRAFRVLRPLRLVSGV). Residues 255–273 (PSLQVVLNSIIKAMVPLLH) are Cytoplasmic-facing. Residues 274-293 (IALLVLFVIIIYAIIGLELF) traverse the membrane as a helical segment. Topologically, residues 294–381 (IGKMHKTCFF…WMNDAMGFEL (88 aa)) are extracellular. An N-linked (GlcNAc...) asparagine glycan is attached at asparagine 329. Glutamate 364 contributes to the Ca(2+) binding site. The chain crosses the membrane as a helical span at residues 382-406 (PWVYFVSLVIFGSFFVLNLVLGVLS). The Cytoplasmic segment spans residues 407–523 (GEFSKEREKA…RRCRAAVKSV (117 aa)). The interval 429 to 446 (QQLEEDLKGYLDWITQAE) is binding to the beta subunit. The tract at residues 449 to 482 (DPENEEEGGEEGKRNTSMPTSETESVNTENVSGE) is disordered. Positions 463–479 (NTSMPTSETESVNTENV) are enriched in polar residues. Residues 509–755 (NRFNRRRCRA…VFLAIAVDNL (247 aa)) form an II repeat. The helical transmembrane segment at 524 to 543 (TFYWLVIVLVFLNTLTISSE) threads the bilayer. Residues 544–558 (HYNQPDWLTQIQDIA) lie on the Extracellular side of the membrane. Residues 559-577 (NKVLLALFTCEMLVKMYSL) traverse the membrane as a helical segment. At 578–585 (GLQAYFVS) the chain is on the cytoplasmic side. Residues 586–604 (LFNRFDCFVVCGGITETIL) traverse the membrane as a helical segment. Over 605-614 (VELEIMSPLG) the chain is Extracellular. Residues 615–633 (ISVFRCVRLLRIFKVTRHW) traverse the membrane as a helical segment. Over 634 to 652 (TSLSNLVASLLNSMKSIAS) the chain is Cytoplasmic. Residues 653-673 (LLLLLFLFIIIFSLLGMQLFG) form a helical membrane-spanning segment. Residues 674-727 (GKFNFDETQTKRSTFDNFPQALLTVFQILTGEDWNAVMYDGIMAYGGPSSSGMI) lie on the Extracellular side of the membrane. Ca(2+) is bound at residue glutamate 705. The helical transmembrane segment at 728–752 (VCIYFIILFICGNYILLNVFLAIAV) threads the bilayer. The Cytoplasmic segment spans residues 753–886 (DNLADAESLN…VGCHKLINHH (134 aa)). Residues 766–790 (KEEAEEKERKKIARKESLENKKNNK) are compositionally biased toward basic and acidic residues. A disordered region spans residues 766 to 850 (KEEAEEKERK…AGPRPRRISE (85 aa)). The span at 791 to 802 (PEVNQIANSDNK) shows a compositional bias: polar residues. Acidic residues predominate over residues 825–838 (VGEEEEEEEEDEPE). The stretch at 873 to 1155 (NPIRVGCHKL…IFVGFVIVTF (283 aa)) is one III repeat. The helical transmembrane segment at 887-905 (IFTNLILVFIMLSSAALAA) threads the bilayer. Topologically, residues 906 to 921 (EDPIRSHSFRNTILGY) are extracellular. Residues 922–941 (FDYAFTAIFTVEILLKMTTF) traverse the membrane as a helical segment. Residues 942–953 (GAFLHKGAFCRN) lie on the Cytoplasmic side of the membrane. Residues 954–972 (YFNLLDMLVVGVSLVSFGI) traverse the membrane as a helical segment. Topologically, residues 973–978 (QSSAIS) are extracellular. A helical membrane pass occupies residues 979–998 (VVKILRVLRVLRPLRAINRA). Topologically, residues 999 to 1017 (KGLKHVVQCVFVAIRTIGN) are cytoplasmic. A helical transmembrane segment spans residues 1018–1037 (IMIVTTLLQFMFACIGVQLF). Topologically, residues 1038 to 1127 (KGKFYRCTDE…IGPIYNHRVE (90 aa)) are extracellular. The interval 1075-1165 (RIWQNSDFNF…QEQGEKEYKN (91 aa)) is dihydropyridine binding. A Ca(2+)-binding site is contributed by glutamate 1101. A helical membrane pass occupies residues 1128–1148 (ISIFFIIYIIIVAFFMMNIFV). The Cytoplasmic segment spans residues 1149–1205 (GFVIVTFQEQGEKEYKNCELDKNQRQCVEYALKARPLRRYIPKNPYQYKFWYVVNSS). Residues 1192–1467 (NPYQYKFWYV…LFVAVIMDNF (276 aa)) form an IV repeat. The helical transmembrane segment at 1206-1224 (PFEYMMFVLIMLNTLCLAM) threads the bilayer. The Extracellular portion of the chain corresponds to 1225–1239 (QHYEQSKMFNDAMDI). Residues 1240-1259 (LNMVFTGVFTVEMVLKVIAF) traverse the membrane as a helical segment. The Cytoplasmic portion of the chain corresponds to 1260-1266 (KPKGYFS). The chain crosses the membrane as a helical span at residues 1267–1288 (DAWNTFDSLIVIGSIIDVALSE). Residues 1289 to 1313 (ADPTESENVPVPTATPGNSEESNRI) are Extracellular-facing. The chain crosses the membrane as a helical span at residues 1314–1333 (SITFFRLFRVMRLVKLLSRG). At 1334–1352 (EGIRTLLWTFIKSFQALPY) the chain is on the cytoplasmic side. A helical membrane pass occupies residues 1353 to 1372 (VALLIAMLFFIYAVIGMQMF). Topologically, residues 1373–1439 (GKVAMRDNNQ…GEEYTCGSNF (67 aa)) are extracellular. A dihydropyridine binding region spans residues 1420 to 1486 (LCDPESDYNP…LGPHHLDEFK (67 aa)). The segment at 1432 to 1475 (EYTCGSNFAIVYFISFYMLCAFLIINLFVAVIMDNFDYLTRDWS) is phenylalkylamine binding. A helical transmembrane segment spans residues 1440-1464 (AIVYFISFYMLCAFLIINLFVAVIM). Topologically, residues 1465–2161 (DNFDYLTRDW…ADEMICITTL (697 aa)) are cytoplasmic. Disordered stretches follow at residues 1659 to 1678 (SCDLQDDEPEETKREEEDDV), 1684 to 1804 (ALLG…VKRT), 1872 to 1919 (PGRN…ASHR), and 2108 to 2152 (NGNV…EDLA). Positions 1745-1763 (SIGKQVPTSTNANLNNANM) are enriched in polar residues. A compositionally biased stretch (basic and acidic residues) spans 1779–1797 (HVSENGHHSSHKHDREPQR). Residues 2138 to 2152 (SDEEPDPGRDEEDLA) are compositionally biased toward acidic residues.

The protein belongs to the calcium channel alpha-1 subunit (TC 1.A.1.11) family. CACNA1D subfamily. As to quaternary structure, voltage-dependent calcium channels are multisubunit complexes, consisting of alpha-1, alpha-2, beta and delta subunits in a 1:1:1:1 ratio. The channel activity is directed by the pore-forming and voltage-sensitive alpha-1 subunit. In many cases, this subunit is sufficient to generate voltage-sensitive calcium channel activity. The auxiliary subunits beta and alpha-2/delta linked by a disulfide bridge regulate the channel activity. Channel activity is further modulated, depending on the presence of specific delta subunit isoforms. Interacts (via IQ domain) with CABP1 and CABP4 in a calcium independent manner. Interacts with RIMBP2. As to expression, expressed in pancreatic islets and in brain, where it has been seen in cerebral cortex, hippocampus, basal ganglia, habenula and thalamus. Expressed in the small cell lung carcinoma cell line SCC-9. No expression in skeletal muscle.

It localises to the membrane. The catalysed reaction is Ca(2+)(in) = Ca(2+)(out). Its function is as follows. Voltage-sensitive calcium channels (VSCC) mediate the entry of calcium ions into excitable cells and are also involved in a variety of calcium-dependent processes, including muscle contraction, hormone or neurotransmitter release, gene expression, cell motility, cell division and cell death. The isoform alpha-1D gives rise to L-type calcium currents. Long-lasting (L-type) calcium channels belong to the 'high-voltage activated' (HVA) group. They are blocked by dihydropyridines (DHP), phenylalkylamines, and by benzothiazepines. In terms of biological role, voltage-sensitive calcium channels (VSCC) mediate the entry of calcium ions into excitable cells and are also involved in a variety of calcium-dependent processes, including muscle contraction, hormone or neurotransmitter release, gene expression, cell motility, cell division and cell death. The isoform alpha-1D gives rise to L-type calcium currents. The polypeptide is Voltage-dependent L-type calcium channel subunit alpha-1D (CACNA1D) (Homo sapiens (Human)).